The primary structure comprises 2539 residues: Zinc finger FYVE domain-containing protein 26 (2539 aa).

Phosphoserine occurs at positions 297, 615, 619, and 703. Disordered regions lie at residues 594 to 637 (HLPE…SLGV), 699 to 724 (ISSRSPPEKPKQESQSCSGSRDGLQS), and 738 to 806 (WRHK…SLSA). Over residues 764-774 (PSLRRGRRTRR) the composition is skewed to basic residues. A compositionally biased stretch (low complexity) spans 787–805 (SLESTSSELSTSTSEGSLS). Phosphoserine is present on serine 800. The stretch at 868–895 (MFMERYQEVIQELAQVEHKIENQNSDAG) forms a coiled coil. The interval 1267 to 1296 (DLPLSTPSSPRTTENPTLERKPYSSPRDSS) is disordered. The segment covering 1271 to 1282 (STPSSPRTTENP) has biased composition (polar residues). Residues serine 1742, serine 1764, serine 1780, and serine 1782 each carry the phosphoserine modification. The tract at residues 1754–1808 (ADPETLPRSPSAEFSPAAPPGISSIHSPSLRERSFPPTQPSQEFVPPATPPARHQ) is disordered. Residues 1760–1769 (PRSPSAEFSP) are compositionally biased toward low complexity. The FYVE-type zinc-finger motif lies at 1812–1872 (DETESICMVC…VCDQCYSYCN (61 aa)). Residues cysteine 1818, cysteine 1821, cysteine 1835, cysteine 1838, cysteine 1843, cysteine 1846, cysteine 1864, and cysteine 1867 each coordinate Zn(2+).

Interacts with AP5Z1, AP5B1, AP5S1 and SPG11. Interacts with TTC19 and KIF13A. As to expression, strongest expression in the adrenal gland, bone marrow, adult brain, fetal brain, lung, placenta, prostate, skeletal muscle, testis, thymus, and retina. Intermediate levels are detected in other structures, including the spinal cord.

It is found in the cytoplasm. The protein resides in the cytoskeleton. The protein localises to the microtubule organizing center. Its subcellular location is the centrosome. It localises to the midbody. Its function is as follows. Phosphatidylinositol 3-phosphate-binding protein required for the abscission step in cytokinesis: recruited to the midbody during cytokinesis and acts as a regulator of abscission. May also be required for efficient homologous recombination DNA double-strand break repair. In Homo sapiens (Human), this protein is Zinc finger FYVE domain-containing protein 26 (ZFYVE26).